Consider the following 182-residue polypeptide: MMEERPSADEVLLIGKVIDAFGLRGEIKIRAITDQVDHLRRHVRTVFLGEERRPFTLQRVHEPKAGILILSLGGVTDRTTAEALRGAEVTIRECDAAPLDQDEYFIHQLYGLRVIESGGGEIGVVREVVQTGANDVIVVERQGRSDTLLPMIHDVVERLDVAAGQIVVRLLPGLIDDDNQEG.

A PRC barrel domain is found at 101–174 (QDEYFIHQLY…QIVVRLLPGL (74 aa)).

This sequence belongs to the RimM family. In terms of assembly, binds ribosomal protein uS19.

The protein localises to the cytoplasm. In terms of biological role, an accessory protein needed during the final step in the assembly of 30S ribosomal subunit, possibly for assembly of the head region. Essential for efficient processing of 16S rRNA. May be needed both before and after RbfA during the maturation of 16S rRNA. It has affinity for free ribosomal 30S subunits but not for 70S ribosomes. In Roseiflexus sp. (strain RS-1), this protein is Ribosome maturation factor RimM.